The primary structure comprises 231 residues: Orotidine 5'-phosphate decarboxylase (231 aa).

Substrate-binding positions include D11, K33, 60–69 (DLKFHDIPNT), T117, R178, Q187, G207, and R208. K62 functions as the Proton donor in the catalytic mechanism.

This sequence belongs to the OMP decarboxylase family. Type 1 subfamily. Homodimer.

The catalysed reaction is orotidine 5'-phosphate + H(+) = UMP + CO2. The protein operates within pyrimidine metabolism; UMP biosynthesis via de novo pathway; UMP from orotate: step 2/2. In terms of biological role, catalyzes the decarboxylation of orotidine 5'-monophosphate (OMP) to uridine 5'-monophosphate (UMP). This Nitrosomonas eutropha (strain DSM 101675 / C91 / Nm57) protein is Orotidine 5'-phosphate decarboxylase.